The following is a 447-amino-acid chain: Multicopper oxidase mco (447 aa).

Residues 1 to 25 (MMNMKEDKKNTMDMKNMKHHDERKK) show a composition bias toward basic and acidic residues. The interval 1–28 (MMNMKEDKKNTMDMKNMKHHDERKKLNS) is disordered. Residues histidine 107, histidine 109, histidine 147, histidine 149, histidine 375, histidine 378, histidine 380, histidine 428, cysteine 429, histidine 430, histidine 434, and methionine 439 each coordinate Cu cation.

The protein belongs to the multicopper oxidase family. The cofactor is Cu cation.

It is found in the cytoplasm. In terms of biological role, may be involved in copper homeostasis and oxidative stress response. This chain is Multicopper oxidase mco (mco), found in Staphylococcus epidermidis (strain ATCC 12228 / FDA PCI 1200).